A 115-amino-acid chain; its full sequence is Meromycolate extension acyl carrier protein (115 aa).

Positions 3-81 (VTQEEIIAGI…DVVTYIQKLE (79 aa)) constitute a Carrier domain. Ser41 is subject to O-(pantetheine 4'-phosphoryl)serine.

The protein belongs to the acyl carrier protein (ACP) family. Post-translationally, 4'-phosphopantetheine is transferred from CoA to a specific serine of apo-AcpM.

The protein resides in the cytoplasm. Acyl carrier protein involved in meromycolate extension. The chain is Meromycolate extension acyl carrier protein (acpM) from Mycobacterium leprae (strain TN).